Here is a 323-residue protein sequence, read N- to C-terminus: MARGPGLAPPPLRLPLLLLVLAAVTGHTAAQDNCTCPTNKMTVCSPDGPGGRCQCRALGSGMAVDCSTLTSKCLLLKARMSAPKNARTLVRPSEHALVDNDGLYDPDCDPEGRFKARQCNQTSVCWCVNSVGVRRTDKGDLSLRCDELVRTHHILIDLRHRPTAGAFNHSDLDAELRRLFRERYRLHPKFVAAVHYEQPTIQIELRQNTSQKAAGDVDIGDAAYYFERDIKGESLFQGRGGLDLRVRGEPLQVERTLIYYLDEIPPKFSMKRLTAGLIAVIVVVVVALVAGMAVLVITNRRKSGKYKKVEIKELGELRKEPSL.

The signal sequence occupies residues 1-26; sequence MARGPGLAPPPLRLPLLLLVLAAVTG. Topologically, residues 27-274 are extracellular; it reads HTAAQDNCTC…PPKFSMKRLT (248 aa). N-linked (GlcNAc...) asparagine glycosylation occurs at N33. The 76-residue stretch at 70 to 145 folds into the Thyroglobulin type-1 domain; it reads TSKCLLLKAR…TDKGDLSLRC (76 aa). 3 cysteine pairs are disulfide-bonded: C73–C108, C119–C125, and C127–C145. N120 carries an N-linked (GlcNAc...) asparagine glycan. N168 and N208 each carry an N-linked (GlcNAc...) asparagine glycan. The chain crosses the membrane as a helical span at residues 275–297; it reads AGLIAVIVVVVVALVAGMAVLVI. Topologically, residues 298–323 are cytoplasmic; sequence TNRRKSGKYKKVEIKELGELRKEPSL.

Belongs to the EPCAM family. In terms of processing, the N-terminus is blocked. In terms of tissue distribution, placenta, pancreatic carcinoma cell lines.

Its subcellular location is the membrane. Its function is as follows. May function as a growth factor receptor. The polypeptide is Tumor-associated calcium signal transducer 2 (TACSTD2) (Homo sapiens (Human)).